A 217-amino-acid chain; its full sequence is Cytochrome b5 domain-containing protein 1 (217 aa).

Residues 6-72 enclose the Cytochrome b5 heme-binding domain; that stretch reads PRFYTPREVS…NPKTGDVKTH (67 aa). Heme contacts are provided by histidine 41 and histidine 72.

It belongs to the cytochrome b5 family.

It is found in the cytoplasm. Its subcellular location is the cytoskeleton. It localises to the cilium axoneme. Functionally, radial spoke stalk protein that binds heme under oxidizing conditions. Required for the coordinated beating of multiple cilia maybe by functioning in a redox signaling pathway. This chain is Cytochrome b5 domain-containing protein 1 (cyb5d1), found in Xenopus tropicalis (Western clawed frog).